The sequence spans 289 residues: D-psicose 3-epimerase (289 aa).

Substrate is bound by residues Tyr-6 and Ala-107. Catalysis depends on Glu-150, which acts as the Proton donor/acceptor. Glu-150 lines the Mn(2+) pocket. Substrate contacts are provided by residues Glu-156 and 183–186 (DTFH). Mn(2+) contacts are provided by Asp-183 and His-209. Residue Arg-215 coordinates substrate. Residue Glu-244 is the Proton donor/acceptor of the active site. Glu-244 serves as a coordination point for Mn(2+).

It belongs to the hyi family. In terms of assembly, homotetramer. Mn(2+) is required as a cofactor. It depends on Co(2+) as a cofactor.

It carries out the reaction D-allulose = keto-D-fructose. Its activity is regulated as follows. Inhibited by Zn(2+) and Cu(2+). Its function is as follows. Involved in the biosynthesis of D-psicose. Catalyzes the reversible epimerization of D-fructose at the C3 position to yield D-psicose. The enzyme is highly specific for D-psicose and shows very low activity with D-tagatose. The substrate specificity decreases in the following order: D-fructose, D-tagatose, D-ribulose, D-xylulose, and D-sorbose. It shows a higher level of activity for cis ketoses than for trans-ketoses. In Agrobacterium fabrum (strain C58 / ATCC 33970) (Agrobacterium tumefaciens (strain C58)), this protein is D-psicose 3-epimerase (dpe).